We begin with the raw amino-acid sequence, 77 residues long: Translation initiation factor IF-1, chloroplastic (77 aa).

The 72-residue stretch at 1-72 (MRKQNLIEME…TKGRITYRLR (72 aa)) folds into the S1-like domain.

The protein belongs to the IF-1 family. In terms of assembly, component of the 30S ribosomal translation pre-initiation complex which assembles on the 30S ribosome in the order IF-2 and IF-3, IF-1 and N-formylmethionyl-tRNA(fMet); mRNA recruitment can occur at any time during PIC assembly.

It localises to the plastid. The protein resides in the chloroplast. Its function is as follows. One of the essential components for the initiation of protein synthesis. Stabilizes the binding of IF-2 and IF-3 on the 30S subunit to which N-formylmethionyl-tRNA(fMet) subsequently binds. Helps modulate mRNA selection, yielding the 30S pre-initiation complex (PIC). Upon addition of the 50S ribosomal subunit IF-1, IF-2 and IF-3 are released leaving the mature 70S translation initiation complex. The sequence is that of Translation initiation factor IF-1, chloroplastic from Staurastrum punctulatum (Green alga).